We begin with the raw amino-acid sequence, 221 residues long: MSIESSATPTTPNAEALQLNSTEVRILGCLIEKQATNPETYPLTLNALVIACNQKTSRDPVMNLTQGQVGQSLRALEGRGLTRLVMGSRADRWEHKVDKGLELVPAQVILTGLLLLRGPQTVSELLTRSNRMHDFEDSEQVVHQLERLIARGLATLVPRQSGQREDRYMHLIGDPEDLQDLLAARQQAPERGNAASPAATQRLDELEARIAALEERLARLE.

It belongs to the UPF0502 family.

This is UPF0502 protein PSPTO_2686 from Pseudomonas syringae pv. tomato (strain ATCC BAA-871 / DC3000).